The following is a 294-amino-acid chain: Nucleoside-specific channel-forming protein Tsx (294 aa).

The signal sequence occupies residues Met-1–Ala-22.

This sequence belongs to the nucleoside-specific channel-forming outer membrane porin (Tsx) (TC 1.B.10) family.

Its subcellular location is the cell outer membrane. Functionally, functions as a substrate-specific channel for nucleosides and deoxynucleosides. Also functions in albicidin uptake and as receptor for colicin K. Also is a receptor for several Tsx-specific bacteriophages. In Klebsiella aerogenes (strain ATCC 13048 / DSM 30053 / CCUG 1429 / JCM 1235 / KCTC 2190 / NBRC 13534 / NCIMB 10102 / NCTC 10006 / CDC 819-56) (Enterobacter aerogenes), this protein is Nucleoside-specific channel-forming protein Tsx.